The following is a 384-amino-acid chain: N-acetyldiaminopimelate deacetylase (384 aa).

Asp-74 is a catalytic residue. Glu-133 acts as the Proton acceptor in catalysis.

This sequence belongs to the peptidase M20A family. N-acetyldiaminopimelate deacetylase subfamily.

The enzyme catalyses N-acetyl-(2S,6S)-2,6-diaminopimelate + H2O = (2S,6S)-2,6-diaminopimelate + acetate. The protein operates within amino-acid biosynthesis; L-lysine biosynthesis via DAP pathway; LL-2,6-diaminopimelate from (S)-tetrahydrodipicolinate (acetylase route): step 3/3. Catalyzes the conversion of N-acetyl-diaminopimelate to diaminopimelate and acetate. The sequence is that of N-acetyldiaminopimelate deacetylase from Lactiplantibacillus plantarum (strain ATCC BAA-793 / NCIMB 8826 / WCFS1) (Lactobacillus plantarum).